A 425-amino-acid polypeptide reads, in one-letter code: UPF0761 membrane protein XCV0968 (425 aa).

6 consecutive transmembrane segments (helical) span residues Val-48–Phe-68, Phe-105–Glu-125, Gly-154–Phe-174, Leu-182–Ile-202, Ala-216–Phe-236, and Ala-250–Leu-270.

The protein belongs to the UPF0761 family.

The protein localises to the cell inner membrane. The sequence is that of UPF0761 membrane protein XCV0968 from Xanthomonas euvesicatoria pv. vesicatoria (strain 85-10) (Xanthomonas campestris pv. vesicatoria).